We begin with the raw amino-acid sequence, 273 residues long: Large ribosomal subunit protein uL2cy (273 aa).

2 disordered regions span residues 1–27 (MAIH…SNPR) and 224–273 (NPVD…RRRK).

The protein belongs to the universal ribosomal protein uL2 family. As to quaternary structure, part of the 50S ribosomal subunit.

Its subcellular location is the plastid. It is found in the chloroplast. This is Large ribosomal subunit protein uL2cy (rpl2-B) from Liriodendron tulipifera (Tuliptree).